The primary structure comprises 370 residues: Histidinol-phosphate aminotransferase 1 (370 aa).

Lys-222 carries the post-translational modification N6-(pyridoxal phosphate)lysine.

The protein belongs to the class-II pyridoxal-phosphate-dependent aminotransferase family. Histidinol-phosphate aminotransferase subfamily. In terms of assembly, homodimer. Pyridoxal 5'-phosphate is required as a cofactor.

The enzyme catalyses L-histidinol phosphate + 2-oxoglutarate = 3-(imidazol-4-yl)-2-oxopropyl phosphate + L-glutamate. It participates in amino-acid biosynthesis; L-histidine biosynthesis; L-histidine from 5-phospho-alpha-D-ribose 1-diphosphate: step 7/9. This chain is Histidinol-phosphate aminotransferase 1, found in Bacillus cereus (strain ATCC 10987 / NRS 248).